A 402-amino-acid chain; its full sequence is Protein PMR5 (402 aa).

A helical; Signal-anchor for type II membrane protein membrane pass occupies residues 7-23 (LLGISVVSAIFFLVLQQ). The disordered stretch occupies residues 40 to 60 (GSSSGSSGNQYSSSRPSAGFQ). The span at 41 to 56 (SSSGSSGNQYSSSRPS) shows a compositional bias: low complexity. The short motif at 140-142 (GDS) is the GDS motif element. The DCXHWCLPGXXDXWN motif motif lies at 379–393 (DCSHWCLPGLPDTWN).

This sequence belongs to the PC-esterase family. TBL subfamily. Expressed in flowers, siliques, stems and leaves.

Its subcellular location is the membrane. Required for nonhost resistance (NHR) during plant-microbe interactions. Plants mutated in PMR5 are resistant to powdery mildew species. May act as a bridging protein that binds pectin and other cell wall polysaccharides. Probably involved in maintaining esterification of pectins. May be involved in the specific O-acetylation of cell wall polymers. In Arabidopsis thaliana (Mouse-ear cress), this protein is Protein PMR5 (PMR5).